The sequence spans 178 residues: CDP-archaeol synthase (178 aa).

The next 5 helical transmembrane spans lie at 3-23 (LLLL…ANAV), 56-76 (FFGI…VILY), 91-111 (IILS…GSFI), 131-151 (FIIF…NIIV), and 152-172 (LLLV…YKLH).

The protein belongs to the CDP-archaeol synthase family. Mg(2+) is required as a cofactor.

Its subcellular location is the cell membrane. The enzyme catalyses 2,3-bis-O-(geranylgeranyl)-sn-glycerol 1-phosphate + CTP + H(+) = CDP-2,3-bis-O-(geranylgeranyl)-sn-glycerol + diphosphate. It functions in the pathway membrane lipid metabolism; glycerophospholipid metabolism. Catalyzes the formation of CDP-2,3-bis-(O-geranylgeranyl)-sn-glycerol (CDP-archaeol) from 2,3-bis-(O-geranylgeranyl)-sn-glycerol 1-phosphate (DGGGP) and CTP. This reaction is the third ether-bond-formation step in the biosynthesis of archaeal membrane lipids. This Methanococcus maripaludis (strain DSM 14266 / JCM 13030 / NBRC 101832 / S2 / LL) protein is CDP-archaeol synthase.